The following is a 594-amino-acid chain: Actin-histidine N-methyltransferase (594 aa).

Residues 1 to 22 form a disordered region; sequence MGKKSRVKTQKSGTGATATVSP. Positions 10-20 are enriched in polar residues; it reads QKSGTGATATV. Residues arginine 75, 104–106, arginine 254, 275–279, and 325–327 contribute to the S-adenosyl-L-methionine site; these read EGF, DMCNH, and SGF. In terms of domain architecture, SET spans 94 to 314; it reads EGFEMVNFKE…AGEQIYIFYG (221 aa). Position 513 is a phosphoserine (serine 513). The segment at 549 to 594 is disordered; that stretch reads ENGLVNGENSIPNGTRSENESLNQESKRAVEDAKGSSSDSTAGVKE. The segment covering 555–572 has biased composition (polar residues); it reads GENSIPNGTRSENESLNQ. A compositionally biased stretch (basic and acidic residues) spans 573-582; the sequence is ESKRAVEDAK. Residues 583-594 are compositionally biased toward polar residues; that stretch reads GSSSDSTAGVKE.

It belongs to the class V-like SAM-binding methyltransferase superfamily. SETD3 actin-histidine methyltransferase family. In terms of assembly, interacts with MYOD1. In terms of processing, phosphorylated by GSK3B, which is required for recognition by the SCF(FBXW7) complex and subsequent degradation. Post-translationally, ubiquitinated by the SCF(FBXW7) complex following phosphorylation by GSK3B, leading to its degradation by the proteasome.

It localises to the cytoplasm. The protein resides in the nucleus. The catalysed reaction is L-histidyl-[protein] + S-adenosyl-L-methionine = N(tele)-methyl-L-histidyl-[protein] + S-adenosyl-L-homocysteine + H(+). Functionally, protein-histidine N-methyltransferase that specifically mediates 3-methylhistidine (tele-methylhistidine) methylation of actin at 'His-73'. Histidine methylation of actin is required for smooth muscle contraction of the laboring uterus during delivery. Does not have protein-lysine N-methyltransferase activity and probably only catalyzes histidine methylation of actin. This chain is Actin-histidine N-methyltransferase, found in Homo sapiens (Human).